Consider the following 295-residue polypeptide: Ribosomal RNA small subunit methyltransferase H (295 aa).

S-adenosyl-L-methionine is bound by residues 32-34 (GGY), aspartate 50, phenylalanine 77, aspartate 98, and glutamine 105. The interval 275-295 (KEISENTRSRSAKLRGIVKEE) is disordered.

Belongs to the methyltransferase superfamily. RsmH family.

The protein localises to the cytoplasm. It catalyses the reaction cytidine(1402) in 16S rRNA + S-adenosyl-L-methionine = N(4)-methylcytidine(1402) in 16S rRNA + S-adenosyl-L-homocysteine + H(+). In terms of biological role, specifically methylates the N4 position of cytidine in position 1402 (C1402) of 16S rRNA. The polypeptide is Ribosomal RNA small subunit methyltransferase H (Anaplasma phagocytophilum (strain HZ)).